Here is a 489-residue protein sequence, read N- to C-terminus: 3-octaprenyl-4-hydroxybenzoate carboxy-lyase (489 aa).

Mn(2+) is bound at residue Asn-172. Residues 175 to 177, 189 to 191, and 194 to 195 contribute to the prenylated FMN site; these read IYR, RWL, and RG. Residue Glu-238 coordinates Mn(2+). The active-site Proton donor is Asp-287.

Belongs to the UbiD family. In terms of assembly, homohexamer. It depends on prenylated FMN as a cofactor. Requires Mn(2+) as cofactor.

The protein resides in the cell membrane. It catalyses the reaction a 4-hydroxy-3-(all-trans-polyprenyl)benzoate + H(+) = a 2-(all-trans-polyprenyl)phenol + CO2. The protein operates within cofactor biosynthesis; ubiquinone biosynthesis. Functionally, catalyzes the decarboxylation of 3-octaprenyl-4-hydroxy benzoate to 2-octaprenylphenol, an intermediate step in ubiquinone biosynthesis. The protein is 3-octaprenyl-4-hydroxybenzoate carboxy-lyase of Salmonella paratyphi B (strain ATCC BAA-1250 / SPB7).